The following is a 409-amino-acid chain: ORC1-type DNA replication protein 1 (409 aa).

ATP is bound by residues threonine 63–alanine 67, tyrosine 206, and arginine 218.

The protein belongs to the CDC6/cdc18 family.

Its function is as follows. Involved in regulation of DNA replication. The sequence is that of ORC1-type DNA replication protein 1 (cdc6-1) from Archaeoglobus fulgidus (strain ATCC 49558 / DSM 4304 / JCM 9628 / NBRC 100126 / VC-16).